The chain runs to 518 residues: MAGKDIKYGVKARESVLIGVNTLANAVKVTLGPKGRNVLIEKSFGAPTITKDGVSVAKEIELKDKFENMGAQMVKEVASKTSDVAGDGTTTATVLAQAIYTEGVKLVAAGGNPMEIKRGIDKGVEAVIAELRNIATPTKEQKEIAQVGTISANSDETIGNIIAEAMDKVGKEGVITVEEAKSMETTLDVVEGMQFDRGYLSPYFVTDPERMEVIMDDPYILLVEKKVSNMKDLLPVLEQVAKMGKGLFILAEDVDGEALATLVVNKLRGTINVAAVKAPGFGDRRKAMLEDIAILTGGQVISEDLGIKLENVTLNDLGTCKRIVTDKDATTIVDGAGDAAQLSSRVKQIHAQIADTTSDYDREKLQERLAKLIGGVAVINVGAATEIEMKEKKGRVEDALNATRAAVEEGVVPGGGVAYMRWLDALEALHLEGEQELGKKILSVPLKSLFVRLPIMLAVKVLLLLMQLRSLKDQTVSTQLPKFTKTLSLQVLSILPRLPVQPCKTQLLYPVCFSPPSV.

Residues 30–33 (TLGP), Lys-51, 87–91 (DGTTT), and Gly-415 contribute to the ATP site.

This sequence belongs to the chaperonin (HSP60) family. In terms of assembly, forms a cylinder of 14 subunits composed of two heptameric rings stacked back-to-back. Interacts with the co-chaperonin GroES.

The protein resides in the cytoplasm. The enzyme catalyses ATP + H2O + a folded polypeptide = ADP + phosphate + an unfolded polypeptide.. Functionally, together with its co-chaperonin GroES, plays an essential role in assisting protein folding. The GroEL-GroES system forms a nano-cage that allows encapsulation of the non-native substrate proteins and provides a physical environment optimized to promote and accelerate protein folding. This is Chaperonin GroEL from Desulfotalea psychrophila (strain LSv54 / DSM 12343).